Reading from the N-terminus, the 344-residue chain is N-acetyl-gamma-glutamyl-phosphate reductase (344 aa).

Cys-149 is an active-site residue.

This sequence belongs to the NAGSA dehydrogenase family. Type 1 subfamily.

The protein localises to the cytoplasm. It carries out the reaction N-acetyl-L-glutamate 5-semialdehyde + phosphate + NADP(+) = N-acetyl-L-glutamyl 5-phosphate + NADPH + H(+). The protein operates within amino-acid biosynthesis; L-arginine biosynthesis; N(2)-acetyl-L-ornithine from L-glutamate: step 3/4. Catalyzes the NADPH-dependent reduction of N-acetyl-5-glutamyl phosphate to yield N-acetyl-L-glutamate 5-semialdehyde. The chain is N-acetyl-gamma-glutamyl-phosphate reductase from Syntrophobacter fumaroxidans (strain DSM 10017 / MPOB).